Consider the following 360-residue polypeptide: Protein phosphatase 1L (360 aa).

Topologically, residues 1-25 are extracellular; that stretch reads MIEDTMTLLSLLGRIMRYFLLRPET. A helical transmembrane segment spans residues 26–42; the sequence is LFLLCISLALWSYFFHT. Over 43–360 the chain is Cytoplasmic; that stretch reads DEVKTIVKSS…FRNSSKTEEH (318 aa). In terms of domain architecture, PPM-type phosphatase spans 92 to 351; it reads NVAVYSIQGR…DNITVMVVKF (260 aa). Mn(2+)-binding residues include aspartate 128, glycine 129, aspartate 302, and aspartate 342.

This sequence belongs to the PP2C family. As to quaternary structure, interacts with MAP3K7/TAK1 and MAP3K5. The cofactor is Mg(2+). It depends on Mn(2+) as a cofactor. In terms of tissue distribution, expressed in brain, heart, testis, liver, lung and skeletal muscle.

The protein resides in the membrane. The catalysed reaction is O-phospho-L-seryl-[protein] + H2O = L-seryl-[protein] + phosphate. It carries out the reaction O-phospho-L-threonyl-[protein] + H2O = L-threonyl-[protein] + phosphate. Acts as a suppressor of the SAPK signaling pathways by associating with and dephosphorylating MAP3K7/TAK1 and MAP3K5, and by attenuating the association between MAP3K7/TAK1 and MAP2K4 or MAP2K6. The chain is Protein phosphatase 1L (Ppm1l) from Mus musculus (Mouse).